A 385-amino-acid polypeptide reads, in one-letter code: Chaperone protein DnaJ (385 aa).

The J domain maps to 5 to 70 (DYYEILEITR…SKRQIYDKYG (66 aa)). The CR-type zinc finger occupies 136 to 213 (GCKKEIHNSF…CKGSGFEISE (78 aa)). Cys149, Cys152, Cys165, Cys168, Cys187, Cys190, Cys201, and Cys204 together coordinate Zn(2+). CXXCXGXG motif repeat units follow at residues 149 to 156 (CSDCKGTG), 165 to 172 (CKDCGGKG), 187 to 194 (CPTCKGEG), and 201 to 208 (CSKCKGSG).

Belongs to the DnaJ family. In terms of assembly, homodimer. Requires Zn(2+) as cofactor.

The protein resides in the cytoplasm. Participates actively in the response to hyperosmotic and heat shock by preventing the aggregation of stress-denatured proteins and by disaggregating proteins, also in an autonomous, DnaK-independent fashion. Unfolded proteins bind initially to DnaJ; upon interaction with the DnaJ-bound protein, DnaK hydrolyzes its bound ATP, resulting in the formation of a stable complex. GrpE releases ADP from DnaK; ATP binding to DnaK triggers the release of the substrate protein, thus completing the reaction cycle. Several rounds of ATP-dependent interactions between DnaJ, DnaK and GrpE are required for fully efficient folding. Also involved, together with DnaK and GrpE, in the DNA replication of plasmids through activation of initiation proteins. In Helicobacter hepaticus (strain ATCC 51449 / 3B1), this protein is Chaperone protein DnaJ.